A 208-amino-acid chain; its full sequence is Protein-L-isoaspartate O-methyltransferase (208 aa).

S59 is an active-site residue.

This sequence belongs to the methyltransferase superfamily. L-isoaspartyl/D-aspartyl protein methyltransferase family.

It localises to the cytoplasm. The catalysed reaction is [protein]-L-isoaspartate + S-adenosyl-L-methionine = [protein]-L-isoaspartate alpha-methyl ester + S-adenosyl-L-homocysteine. In terms of biological role, catalyzes the methyl esterification of L-isoaspartyl residues in peptides and proteins that result from spontaneous decomposition of normal L-aspartyl and L-asparaginyl residues. It plays a role in the repair and/or degradation of damaged proteins. The sequence is that of Protein-L-isoaspartate O-methyltransferase from Yersinia enterocolitica serotype O:8 / biotype 1B (strain NCTC 13174 / 8081).